Here is a 128-residue protein sequence, read N- to C-terminus: Small ribosomal subunit protein uS11 (128 aa).

Belongs to the universal ribosomal protein uS11 family. Part of the 30S ribosomal subunit. Interacts with proteins S7 and S18. Binds to IF-3.

Located on the platform of the 30S subunit, it bridges several disparate RNA helices of the 16S rRNA. Forms part of the Shine-Dalgarno cleft in the 70S ribosome. The sequence is that of Small ribosomal subunit protein uS11 from Desulfosudis oleivorans (strain DSM 6200 / JCM 39069 / Hxd3) (Desulfococcus oleovorans).